A 250-amino-acid polypeptide reads, in one-letter code: uncharacterized protein (250 aa).

The N-terminal stretch at 1–25 (MKTLRTLCVLMILSGVIFFGLKIDA) is a signal peptide.

This is an uncharacterized protein from Bacillus subtilis (strain 168).